The primary structure comprises 857 residues: Dynein regulatory complex protein 11 (857 aa).

The IQ domain maps to 206-235 (TKLAALQIQKVWRGFHQCKKTVKEREEEMV). The segment at 348–388 (EEKLKKKKKKEDKENKGKKGKKEKKEKKEKKVSLKEKAMKD) is disordered. The span at 365 to 375 (KKGKKEKKEKK) shows a compositional bias: basic residues. Basic and acidic residues predominate over residues 376-387 (EKKVSLKEKAMK). 598 to 605 (GPSGVGKK) contributes to the ATP binding site. The segment at 834–857 (SLTVGNKEKEKDKGKKGKRGKKKK) is disordered. The segment covering 847 to 857 (GKKGKRGKKKK) has biased composition (basic residues).

The protein belongs to the AAA ATPase family. DRC11 subfamily. As to quaternary structure, component of the nexin-dynein regulatory complex (N-DRC).

The protein localises to the cytoplasm. Its subcellular location is the cytoskeleton. It localises to the flagellum axoneme. Its function is as follows. Component of the nexin-dynein regulatory complex (N-DRC), a key regulator of ciliary/flagellar motility which maintains the alignment and integrity of the distal axoneme and regulates microtubule sliding in motile axonemes. The chain is Dynein regulatory complex protein 11 (Iqca1) from Mus musculus (Mouse).